Reading from the N-terminus, the 616-residue chain is Dihydroxy-acid dehydratase (616 aa).

D81 is a binding site for Mg(2+). Residue C122 participates in [2Fe-2S] cluster binding. Positions 123 and 124 each coordinate Mg(2+). The residue at position 124 (K124) is an N6-carboxylysine. [2Fe-2S] cluster is bound at residue C195. E491 serves as a coordination point for Mg(2+). The active-site Proton acceptor is S517.

It belongs to the IlvD/Edd family. Homodimer. [2Fe-2S] cluster serves as cofactor. The cofactor is Mg(2+).

It catalyses the reaction (2R)-2,3-dihydroxy-3-methylbutanoate = 3-methyl-2-oxobutanoate + H2O. The catalysed reaction is (2R,3R)-2,3-dihydroxy-3-methylpentanoate = (S)-3-methyl-2-oxopentanoate + H2O. Its pathway is amino-acid biosynthesis; L-isoleucine biosynthesis; L-isoleucine from 2-oxobutanoate: step 3/4. It functions in the pathway amino-acid biosynthesis; L-valine biosynthesis; L-valine from pyruvate: step 3/4. In terms of biological role, functions in the biosynthesis of branched-chain amino acids. Catalyzes the dehydration of (2R,3R)-2,3-dihydroxy-3-methylpentanoate (2,3-dihydroxy-3-methylvalerate) into 2-oxo-3-methylpentanoate (2-oxo-3-methylvalerate) and of (2R)-2,3-dihydroxy-3-methylbutanoate (2,3-dihydroxyisovalerate) into 2-oxo-3-methylbutanoate (2-oxoisovalerate), the penultimate precursor to L-isoleucine and L-valine, respectively. This chain is Dihydroxy-acid dehydratase, found in Escherichia coli (strain SMS-3-5 / SECEC).